The sequence spans 490 residues: Argininosuccinate lyase (490 aa).

The protein belongs to the lyase 1 family. Argininosuccinate lyase subfamily.

It is found in the cytoplasm. It carries out the reaction 2-(N(omega)-L-arginino)succinate = fumarate + L-arginine. It participates in amino-acid biosynthesis; L-arginine biosynthesis; L-arginine from L-ornithine and carbamoyl phosphate: step 3/3. The sequence is that of Argininosuccinate lyase from Bifidobacterium longum subsp. infantis (strain ATCC 15697 / DSM 20088 / JCM 1222 / NCTC 11817 / S12).